The chain runs to 74 residues: Kappa-scoloptoxin(07)-Ssm2c (74 aa).

The N-terminal stretch at 1-19 (MLVFYAPLFVSIFSNTVMG) is a signal peptide. The propeptide occupies 20–41 (ATIDKPIPKPILREAIEKIAVN).

The protein belongs to the scoloptoxin-07 family. Post-translationally, contains 3 disulfide bonds. Expressed by the venom gland.

The protein localises to the secreted. In terms of biological role, inhibits voltage-gated potassium channels. The chain is Kappa-scoloptoxin(07)-Ssm2c from Scolopendra mutilans (Chinese red-headed centipede).